Here is a 366-residue protein sequence, read N- to C-terminus: uncharacterized protein (366 aa).

The region spanning Ala63–Ala288 is the OBG-type G domain. Residues Gly69–Ser76, Asp115–Ile119, and Asn246–Asp249 contribute to the GTP site. The region spanning Ala288–Lys365 is the TGS domain.

This sequence belongs to the TRAFAC class OBG-HflX-like GTPase superfamily. OBG GTPase family.

This is an uncharacterized protein from Caenorhabditis elegans.